The sequence spans 350 residues: Hydroxymethylglutaryl-CoA synthase (350 aa).

Positions 33 and 34 each coordinate (3S)-3-hydroxy-3-methylglutaryl-CoA. Catalysis depends on glutamate 85, which acts as the Proton donor/acceptor. Residues cysteine 117 and threonine 158 each coordinate (3S)-3-hydroxy-3-methylglutaryl-CoA. Residue cysteine 117 is the Acyl-thioester intermediate of the active site. Arginine 204 lines the CoA pocket. Threonine 206 and histidine 239 together coordinate (3S)-3-hydroxy-3-methylglutaryl-CoA. The active-site Proton donor/acceptor is the histidine 239. Lysine 244 contacts CoA. (3S)-3-hydroxy-3-methylglutaryl-CoA contacts are provided by lysine 248, asparagine 271, and serine 301.

The protein belongs to the thiolase-like superfamily. Archaeal HMG-CoA synthase family. In terms of assembly, interacts with acetoacetyl-CoA thiolase that catalyzes the precedent step in the pathway and with a DUF35 protein. The acetoacetyl-CoA thiolase/HMG-CoA synthase complex channels the intermediate via a fused CoA-binding site, which allows for efficient coupling of the endergonic thiolase reaction with the exergonic HMGCS reaction.

It catalyses the reaction acetoacetyl-CoA + acetyl-CoA + H2O = (3S)-3-hydroxy-3-methylglutaryl-CoA + CoA + H(+). Its pathway is metabolic intermediate biosynthesis; (R)-mevalonate biosynthesis; (R)-mevalonate from acetyl-CoA: step 2/3. Catalyzes the condensation of acetyl-CoA with acetoacetyl-CoA to form 3-hydroxy-3-methylglutaryl-CoA (HMG-CoA). Functions in the mevalonate (MVA) pathway leading to isopentenyl diphosphate (IPP), a key precursor for the biosynthesis of isoprenoid compounds that are building blocks of archaeal membrane lipids. The sequence is that of Hydroxymethylglutaryl-CoA synthase from Methanopyrus kandleri (strain AV19 / DSM 6324 / JCM 9639 / NBRC 100938).